The sequence spans 498 residues: Lycopene beta cyclase, chloroplastic/chromoplastic (498 aa).

Residues 1-79 constitute a chloroplast and chromoplast transit peptide; that stretch reads MDTLLRTPNN…ELPMYDPSKG (79 aa). Position 84–112 (84–112) interacts with NAD(+); sequence LAVVGGGPAGLAVAQQVSEAGLSVCSIDP. An FLEET motif motif is present at residues 293–297; sequence FLEET.

Belongs to the lycopene cyclase family. In terms of assembly, monomer. FAD is required as a cofactor. The cofactor is NADPH.

The protein localises to the plastid. Its subcellular location is the chloroplast. It localises to the chromoplast. It catalyses the reaction a carotenoid psi-end group = a carotenoid beta-end derivative. The enzyme catalyses all-trans-lycopene = gamma-carotene. The catalysed reaction is gamma-carotene = all-trans-beta-carotene. It carries out the reaction all-trans-neurosporene = beta-zeacarotene. It catalyses the reaction beta-zeacarotene = 7,8-dihydro-beta-carotene. The protein operates within carotenoid biosynthesis; beta-carotene biosynthesis. It participates in carotenoid biosynthesis; beta-zeacarotene biosynthesis. Functionally, catalyzes the double cyclization reaction which converts lycopene to beta-carotene. Catalyzes the double cyclization reaction which converts neurosporene to 7,8-dihydro-beta-carotene. This Capsicum annuum (Capsicum pepper) protein is Lycopene beta cyclase, chloroplastic/chromoplastic.